A 381-amino-acid chain; its full sequence is Chorismate synthase (381 aa).

NADP(+) contacts are provided by R39 and R45. FMN-binding positions include 127 to 129 (RAS), 248 to 249 (QS), G293, 308 to 312 (KPIPT), and R334.

It belongs to the chorismate synthase family. In terms of assembly, homotetramer. The cofactor is FMNH2.

It carries out the reaction 5-O-(1-carboxyvinyl)-3-phosphoshikimate = chorismate + phosphate. The protein operates within metabolic intermediate biosynthesis; chorismate biosynthesis; chorismate from D-erythrose 4-phosphate and phosphoenolpyruvate: step 7/7. Its function is as follows. Catalyzes the anti-1,4-elimination of the C-3 phosphate and the C-6 proR hydrogen from 5-enolpyruvylshikimate-3-phosphate (EPSP) to yield chorismate, which is the branch point compound that serves as the starting substrate for the three terminal pathways of aromatic amino acid biosynthesis. This reaction introduces a second double bond into the aromatic ring system. This chain is Chorismate synthase, found in Caldicellulosiruptor saccharolyticus (strain ATCC 43494 / DSM 8903 / Tp8T 6331).